Reading from the N-terminus, the 393-residue chain is SEC12-like protein 2 (393 aa).

Ala-2 is modified (N-acetylalanine). The Cytoplasmic portion of the chain corresponds to 2 to 367 (ANQSTETNQP…EQKGDKPGVR (366 aa)). The segment at 41-67 (EKSEDDDESSSSSSSSRSCIVLSGGGG) is disordered. Position 43 is a phosphoserine (Ser-43). WD repeat units lie at residues 151–190 (RDVG…TLLN), 193–231 (QAHS…AVAS), 283–322 (IKKN…TIQV), and 326–367 (AHLG…PGVR). Residues 368 to 388 (WWLLVLLIVLLYVVAYYYMKA) traverse the membrane as a helical; Signal-anchor for type II membrane protein segment. At 389 to 393 (KGIIP) the chain is on the lumenal side.

As to quaternary structure, interacts with BZIP28.

It is found in the endoplasmic reticulum membrane. The protein resides in the golgi apparatus. The protein localises to the cis-Golgi network membrane. Required for the formation or budding of transport vesicles from the ER. The polypeptide is SEC12-like protein 2 (STL2P) (Arabidopsis thaliana (Mouse-ear cress)).